The sequence spans 430 residues: Maintenance of mitochondrial morphology protein 1 (430 aa).

Residues 1 to 70 (MSQGLIETTT…NGNTWSFTQG (70 aa)) lie on the Lumenal side of the membrane. The helical transmembrane segment at 71–91 (LVIGQISVIFIIIVFVKFFVF) threads the bilayer. The Cytoplasmic portion of the chain corresponds to 92–430 (ADSSSHIPTK…TPGEFVNSNI (339 aa)). Residues 159-387 (ASESLDWFNV…EPRFQVVRLP (229 aa)) enclose the SMP-LTD domain. Residues 305–326 (GYSKENGSADSASDNDEDEDDG) form a disordered region. The segment covering 317 to 326 (SDNDEDEDDG) has biased composition (acidic residues).

Belongs to the MMM1 family. As to quaternary structure, homodimer. Component of the ER-mitochondria encounter structure (ERMES) or MDM complex, composed of MMM1, MDM10, MDM12 and MDM34. An MMM1 homodimer associates with one molecule of MDM12 on each side in a pairwise head-to-tail manner, and the SMP-LTD domains of MMM1 and MDM12 generate a continuous hydrophobic tunnel for phospholipid trafficking.

The protein resides in the endoplasmic reticulum membrane. Its function is as follows. Component of the ERMES/MDM complex, which serves as a molecular tether to connect the endoplasmic reticulum (ER) and mitochondria. Components of this complex are involved in the control of mitochondrial shape and protein biogenesis, and function in nonvesicular lipid trafficking between the ER and mitochondria. The MDM12-MMM1 subcomplex functions in the major beta-barrel assembly pathway that is responsible for biogenesis of all outer membrane beta-barrel proteins, and acts in a late step after the SAM complex. The MDM10-MDM12-MMM1 subcomplex further acts in the TOM40-specific pathway after the action of the MDM12-MMM1 complex. Essential for establishing and maintaining the structure of mitochondria and maintenance of mtDNA nucleoids. The protein is Maintenance of mitochondrial morphology protein 1 of Candida dubliniensis (strain CD36 / ATCC MYA-646 / CBS 7987 / NCPF 3949 / NRRL Y-17841) (Yeast).